The following is a 389-amino-acid chain: GTPase Obg (389 aa).

The Obg domain maps to 1–159 (MKFVDEAVIR…RSLKLELLLL (159 aa)). One can recognise an OBG-type G domain in the interval 160-333 (ADVGLLGMPN…LALKLLDYIA (174 aa)). GTP-binding positions include 166-173 (GMPNAGKS), 191-195 (FTTLV), 213-216 (DIPG), 283-286 (NKTD), and 314-316 (SAY). Mg(2+) is bound by residues Ser173 and Thr193.

The protein belongs to the TRAFAC class OBG-HflX-like GTPase superfamily. OBG GTPase family. In terms of assembly, monomer. Mg(2+) is required as a cofactor.

The protein localises to the cytoplasm. An essential GTPase which binds GTP, GDP and possibly (p)ppGpp with moderate affinity, with high nucleotide exchange rates and a fairly low GTP hydrolysis rate. Plays a role in control of the cell cycle, stress response, ribosome biogenesis and in those bacteria that undergo differentiation, in morphogenesis control. The chain is GTPase Obg from Shewanella baltica (strain OS223).